We begin with the raw amino-acid sequence, 383 residues long: Insecticidal crystal protein Cry35Ab1 (383 aa).

In terms of domain architecture, Ricin B-type lectin spans 26-138 (DDSGVSLMNK…NNPNQQWNLT (113 aa)).

It belongs to the toxin_10 family. In terms of assembly, monomer in solution. Copurifies from parasporal inclusion bodies with Cry34Ab1. In terms of processing, proteolytic processing occurs near the C-terminus yielding a stable protein of approximately 40 kDa; this may be the active form of the protein.

Functionally, component of a binary insecticidal toxin active on western corn rootworm (WCR, Diabrotica virgifera subsp. virgifera Le Conte) and probably also on northern corn rootworm (D.barberi). Both proteins are required for maximal toxicity. The larval midgut epithelium is probably the primary target. This protein alone has no activity against southern corn rootworm (Diabrotica undecimpunctata howardi Barber), but it synergizes the toxic effect of its Cry34Ab1 partner. The 2 proteins individually and together form ion channels; channels made in the presence of the 2 proteins have higher conductance. Binds to WCR third instar midgut brush border membrane vesicles; binding improves over 10-fold in the presence of Cry34Ab1. This chain is Insecticidal crystal protein Cry35Ab1, found in Bacillus thuringiensis.